Reading from the N-terminus, the 411-residue chain is Adenylosuccinate synthetase (411 aa).

GTP is bound by residues 11–17 (GDEGKGK) and 39–41 (GHT). Aspartate 12 acts as the Proton acceptor in catalysis. Residues aspartate 12 and glycine 39 each contribute to the Mg(2+) site. Residues 12 to 15 (DEGK), 37 to 40 (NAGH), threonine 121, arginine 135, glutamine 215, threonine 230, and arginine 294 each bind IMP. Residue histidine 40 is the Proton donor of the active site. 290–296 (TTTKRPR) contributes to the substrate binding site. GTP is bound by residues arginine 296, 322–324 (KLD), and 400–402 (STS).

The protein belongs to the adenylosuccinate synthetase family. Homodimer. Requires Mg(2+) as cofactor.

Its subcellular location is the cytoplasm. It catalyses the reaction IMP + L-aspartate + GTP = N(6)-(1,2-dicarboxyethyl)-AMP + GDP + phosphate + 2 H(+). It functions in the pathway purine metabolism; AMP biosynthesis via de novo pathway; AMP from IMP: step 1/2. Functionally, plays an important role in the de novo pathway of purine nucleotide biosynthesis. Catalyzes the first committed step in the biosynthesis of AMP from IMP. This is Adenylosuccinate synthetase from Helicobacter pylori (strain ATCC 700392 / 26695) (Campylobacter pylori).